Here is a 186-residue protein sequence, read N- to C-terminus: ATP synthase subunit delta (186 aa).

The protein belongs to the ATPase delta chain family. As to quaternary structure, F-type ATPases have 2 components, F(1) - the catalytic core - and F(0) - the membrane proton channel. F(1) has five subunits: alpha(3), beta(3), gamma(1), delta(1), epsilon(1). F(0) has three main subunits: a(1), b(2) and c(10-14). The alpha and beta chains form an alternating ring which encloses part of the gamma chain. F(1) is attached to F(0) by a central stalk formed by the gamma and epsilon chains, while a peripheral stalk is formed by the delta and b chains.

The protein resides in the cell inner membrane. F(1)F(0) ATP synthase produces ATP from ADP in the presence of a proton or sodium gradient. F-type ATPases consist of two structural domains, F(1) containing the extramembraneous catalytic core and F(0) containing the membrane proton channel, linked together by a central stalk and a peripheral stalk. During catalysis, ATP synthesis in the catalytic domain of F(1) is coupled via a rotary mechanism of the central stalk subunits to proton translocation. Functionally, this protein is part of the stalk that links CF(0) to CF(1). It either transmits conformational changes from CF(0) to CF(1) or is implicated in proton conduction. The sequence is that of ATP synthase subunit delta from Nitrobacter hamburgensis (strain DSM 10229 / NCIMB 13809 / X14).